We begin with the raw amino-acid sequence, 295 residues long: Hepatic leukemia factor (295 aa).

The segment covering 36–52 has biased composition (basic and acidic residues); sequence PEDAFSKEKDKGKKLDD. Disordered stretches follow at residues 36–76 and 92–149; these read PEDA…TLPY and LSEN…SPIR. The region spanning 225 to 288 is the bZIP domain; the sequence is DDKYWARRRK…GKCKNILAKY (64 aa). The interval 227 to 247 is basic motif; the sequence is KYWARRRKNNMAAKRSRDARR. The segment at 248–255 is leucine-zipper; sequence LKENQIAI.

This sequence belongs to the bZIP family. PAR subfamily. As to quaternary structure, binds DNA specifically as homodimer or heterodimer with other PAR factors.

It is found in the nucleus. The polypeptide is Hepatic leukemia factor (Hlf) (Mus musculus (Mouse)).